The primary structure comprises 68 residues: Galectin-10 (68 aa).

The Galectin domain occupies 1–68 (EPYLQVDFHT…LSISVLPDKY (68 aa)).

Interacts with CEL.

The protein resides in the cytoplasm. The protein localises to the cytosol. Its subcellular location is the cytoplasmic granule. In terms of biological role, regulates immune responses through the recognition of cell-surface glycans. Essential for the anergy and suppressive function of CD25-positive regulatory T-cells (Treg). The chain is Galectin-10 (CLC) from Pongo pygmaeus (Bornean orangutan).